A 460-amino-acid chain; its full sequence is tRNA modification GTPase MnmE (460 aa).

Arg29, Glu91, and Lys132 together coordinate (6S)-5-formyl-5,6,7,8-tetrahydrofolate. The region spanning 227–383 is the TrmE-type G domain; it reads GISIALIGKT…LIDTIIKKCG (157 aa). Asn237 serves as a coordination point for K(+). GTP is bound by residues 237-242, 256-262, and 281-284; these read NVGKSS, TNIPGTT, and DTAG. A Mg(2+)-binding site is contributed by Ser241. The K(+) site is built by Thr256, Ile258, and Thr261. Residue Thr262 participates in Mg(2+) binding. Lys460 contributes to the (6S)-5-formyl-5,6,7,8-tetrahydrofolate binding site.

It belongs to the TRAFAC class TrmE-Era-EngA-EngB-Septin-like GTPase superfamily. TrmE GTPase family. As to quaternary structure, homodimer. Heterotetramer of two MnmE and two MnmG subunits. K(+) serves as cofactor.

The protein localises to the cytoplasm. Its function is as follows. Exhibits a very high intrinsic GTPase hydrolysis rate. Involved in the addition of a carboxymethylaminomethyl (cmnm) group at the wobble position (U34) of certain tRNAs, forming tRNA-cmnm(5)s(2)U34. The polypeptide is tRNA modification GTPase MnmE (Prochlorococcus marinus (strain AS9601)).